The chain runs to 701 residues: T-cell immunomodulatory protein homolog (701 aa).

Positions 1-29 (MVKCGKYVLILELLLLTLLYNLIKRVSNS) are cleaved as a signal peptide. At 30 to 657 (GETVSSFVDG…IQLSVNPSNK (628 aa)) the chain is on the extracellular side. Residues Asn148, Asn180, Asn217, Asn258, Asn458, Asn522, and Asn571 are each glycosylated (N-linked (GlcNAc...) asparagine). A helical transmembrane segment spans residues 658 to 678 (FYSIIYITLICLSVIGVLIFI). The Cytoplasmic segment spans residues 679-701 (LDRKEKIEDSKEEMGFKSHFVIG).

Belongs to the TIP family.

The protein resides in the membrane. Functionally, may protect the parasite against attack by the host immune system by immunomodulation. This Plasmodium yoelii yoelii protein is T-cell immunomodulatory protein homolog.